A 156-amino-acid polypeptide reads, in one-letter code: ATP synthase subunit b (156 aa).

A helical transmembrane segment spans residues 11 to 31 (AIAFILFVWFCMKYVWPPLMA).

The protein belongs to the ATPase B chain family. F-type ATPases have 2 components, F(1) - the catalytic core - and F(0) - the membrane proton channel. F(1) has five subunits: alpha(3), beta(3), gamma(1), delta(1), epsilon(1). F(0) has three main subunits: a(1), b(2) and c(10-14). The alpha and beta chains form an alternating ring which encloses part of the gamma chain. F(1) is attached to F(0) by a central stalk formed by the gamma and epsilon chains, while a peripheral stalk is formed by the delta and b chains.

Its subcellular location is the cell inner membrane. Functionally, f(1)F(0) ATP synthase produces ATP from ADP in the presence of a proton or sodium gradient. F-type ATPases consist of two structural domains, F(1) containing the extramembraneous catalytic core and F(0) containing the membrane proton channel, linked together by a central stalk and a peripheral stalk. During catalysis, ATP synthesis in the catalytic domain of F(1) is coupled via a rotary mechanism of the central stalk subunits to proton translocation. In terms of biological role, component of the F(0) channel, it forms part of the peripheral stalk, linking F(1) to F(0). In Salmonella gallinarum (strain 287/91 / NCTC 13346), this protein is ATP synthase subunit b.